Consider the following 108-residue polypeptide: ER membrane protein complex subunit 6 (108 aa).

Helical transmembrane passes span 21–41 (VVSF…GILG), 45–65 (YEGL…LFAL), and 86–106 (ILDG…LVYV).

This sequence belongs to the EMC6 family.

Its subcellular location is the endoplasmic reticulum membrane. This is ER membrane protein complex subunit 6 from Schizosaccharomyces pombe (strain 972 / ATCC 24843) (Fission yeast).